A 238-amino-acid polypeptide reads, in one-letter code: Ribonuclease 3 (238 aa).

One can recognise an RNase III domain in the interval 10–139 (FKQFQEQTGI…FIGALYLDQG (130 aa)). Residue glutamate 52 coordinates Mg(2+). Aspartate 56 is an active-site residue. 2 residues coordinate Mg(2+): aspartate 125 and glutamate 128. The active site involves glutamate 128. The region spanning 165–234 (DYKSQLQEFV…AQMALAKLKQ (70 aa)) is the DRBM domain.

This sequence belongs to the ribonuclease III family. Homodimer. Mg(2+) serves as cofactor.

It localises to the cytoplasm. It carries out the reaction Endonucleolytic cleavage to 5'-phosphomonoester.. In terms of biological role, digests double-stranded RNA. Involved in the processing of primary rRNA transcript to yield the immediate precursors to the large and small rRNAs (23S and 16S). Processes some mRNAs, and tRNAs when they are encoded in the rRNA operon. Processes pre-crRNA and tracrRNA of type II CRISPR loci if present in the organism. The protein is Ribonuclease 3 of Anoxybacillus flavithermus (strain DSM 21510 / WK1).